A 366-amino-acid polypeptide reads, in one-letter code: tRNA/tmRNA (uracil-C(5))-methyltransferase (366 aa).

S-adenosyl-L-methionine is bound by residues Q190, Y218, N223, E239, and D299. C324 functions as the Nucleophile in the catalytic mechanism. E358 serves as the catalytic Proton acceptor.

This sequence belongs to the class I-like SAM-binding methyltransferase superfamily. RNA M5U methyltransferase family. TrmA subfamily.

It carries out the reaction uridine(54) in tRNA + S-adenosyl-L-methionine = 5-methyluridine(54) in tRNA + S-adenosyl-L-homocysteine + H(+). It catalyses the reaction uridine(341) in tmRNA + S-adenosyl-L-methionine = 5-methyluridine(341) in tmRNA + S-adenosyl-L-homocysteine + H(+). Functionally, dual-specificity methyltransferase that catalyzes the formation of 5-methyluridine at position 54 (m5U54) in all tRNAs, and that of position 341 (m5U341) in tmRNA (transfer-mRNA). The chain is tRNA/tmRNA (uracil-C(5))-methyltransferase from Escherichia coli O81 (strain ED1a).